The primary structure comprises 272 residues: GATA zinc finger domain-containing protein 1 (272 aa).

A GATA-type zinc finger spans residues 9–33 (CSVCKTTSSSMWKKGPQGEILCHHC). The tract at residues 67–120 (TFASTSAAPPQSNGGGGGKQSKQEIHRRSARLRNTKYKSAPAAEKKVSTKGKGR) is disordered. An N6-acetyllysine modification is found at Lys-167. Lys-265 participates in a covalent cross-link: Glycyl lysine isopeptide (Lys-Gly) (interchain with G-Cter in SUMO2).

The protein localises to the nucleus. This chain is GATA zinc finger domain-containing protein 1 (GATAD1), found in Bos taurus (Bovine).